A 466-amino-acid chain; its full sequence is Phosphoenolpyruvate carboxykinase (ATP) (466 aa).

R61, Y196, and K202 together coordinate substrate. ATP is bound by residues K202, H221, and 237–245; that span reads GLSGTGKTT. Positions 202 and 221 each coordinate Mn(2+). D258 lines the Mn(2+) pocket. ATP contacts are provided by E286, R323, and T448. R323 contacts substrate.

Belongs to the phosphoenolpyruvate carboxykinase (ATP) family. Mn(2+) is required as a cofactor.

It localises to the cytoplasm. It catalyses the reaction oxaloacetate + ATP = phosphoenolpyruvate + ADP + CO2. Its pathway is carbohydrate biosynthesis; gluconeogenesis. Involved in the gluconeogenesis. Catalyzes the conversion of oxaloacetate (OAA) to phosphoenolpyruvate (PEP) through direct phosphoryl transfer between the nucleoside triphosphate and OAA. This is Phosphoenolpyruvate carboxykinase (ATP) from Deinococcus radiodurans (strain ATCC 13939 / DSM 20539 / JCM 16871 / CCUG 27074 / LMG 4051 / NBRC 15346 / NCIMB 9279 / VKM B-1422 / R1).